The sequence spans 721 residues: MSEYTNEHFNNRELSWLDFNERVLEEAMDERNPLMERLKFLAIFSSNLDEFYMVRVGGLKDEVLAGFNRPEDKTGLTPKQQIKSISMRAQELVETQYATYKKITKQLSNQHVRFLRTKHLNKTQQDFVKEYFRTHVFPVLTPIAVDAYRPFPMLLSKSLNIAVEIASNGEGKKRLALVQVPSVLPRYLELPTDDEEHTDLILLEDLIIQFIDSLFKGFVVESTMPFRITRNADMPFHEEGSRDVLKQIEKELKKRRYGVAIRLEVQQRSLRKELLFMLQDVLDLHDRDIFIVDGPIDLTFLFGIYNQIGMEYDDMINETLIPFIPEGLESGKDLFQSIAKQDYLLHHPYHSFDPIVRFIVQAAKDPNVLAIKQTLYRVSGDSPIIKALTDAAESGKQVTVLVELKARFDEEKNIQWAKQLEKAGAHVIYGYKELKTHSKITLVVRILEGGVLQRFIHLGTGNYNDSTAKLYTDIGLLTTNEELAEDATNFFNWLSGYGERPSWHQFETSPDDMKDFFLNKIDDEIKLHEKYGNGRIVAKMNSITDRAIITKLYDASSAGVKIDLIVRGICCLRPGIKGVSENIKVISIIDRYLEHSRIFYFYQNGKEDLYCSSADWMTRNMKKRIEILFPILNASHKTYIKDMMALQLVDNVKARRQRSDGRYVYVKRETNEEEIQSQIIIHQYTGGRWNNIPSVFEREPSNWAEREVLRLRAENEKMTDD.

Asn47 contacts ATP. Positions 377 and 407 each coordinate Mg(2+). The active-site Phosphohistidine intermediate is the His437. ATP contacts are provided by Tyr471, Arg567, and His595.

This sequence belongs to the polyphosphate kinase 1 (PPK1) family. Mg(2+) serves as cofactor. Post-translationally, an intermediate of this reaction is the autophosphorylated ppk in which a phosphate is covalently linked to a histidine residue through a N-P bond.

The enzyme catalyses [phosphate](n) + ATP = [phosphate](n+1) + ADP. Functionally, catalyzes the reversible transfer of the terminal phosphate of ATP to form a long-chain polyphosphate (polyP). This Exiguobacterium sp. (strain ATCC BAA-1283 / AT1b) protein is Polyphosphate kinase.